The chain runs to 656 residues: Threonine--tRNA ligase (656 aa).

Residues 1-64 (MAEAASLTFP…ERSGKIEIIT (64 aa)) enclose the TGS domain. Positions 246–548 (DHRRLGREMD…LIENYAGHFP (303 aa)) are catalytic. 3 residues coordinate Zn(2+): cysteine 342, histidine 393, and histidine 525.

Belongs to the class-II aminoacyl-tRNA synthetase family. As to quaternary structure, homodimer. Zn(2+) is required as a cofactor.

It localises to the cytoplasm. It carries out the reaction tRNA(Thr) + L-threonine + ATP = L-threonyl-tRNA(Thr) + AMP + diphosphate + H(+). Its function is as follows. Catalyzes the attachment of threonine to tRNA(Thr) in a two-step reaction: L-threonine is first activated by ATP to form Thr-AMP and then transferred to the acceptor end of tRNA(Thr). Also edits incorrectly charged L-seryl-tRNA(Thr). This is Threonine--tRNA ligase from Chelativorans sp. (strain BNC1).